The chain runs to 239 residues: Ribonuclease HII (239 aa).

One can recognise an RNase H type-2 domain in the interval 18–231 (KIIVGLDEAG…SKNLLKEIEE (214 aa)). A divalent metal cation is bound by residues aspartate 24, glutamate 25, and aspartate 125.

This sequence belongs to the RNase HII family. Mn(2+) serves as cofactor. Requires Mg(2+) as cofactor.

The protein localises to the cytoplasm. The catalysed reaction is Endonucleolytic cleavage to 5'-phosphomonoester.. Its function is as follows. Endonuclease that specifically degrades the RNA of RNA-DNA hybrids. This Methanococcus maripaludis (strain C5 / ATCC BAA-1333) protein is Ribonuclease HII.